We begin with the raw amino-acid sequence, 306 residues long: Recombination-associated protein RdgC (306 aa).

This sequence belongs to the RdgC family.

The protein resides in the cytoplasm. Its subcellular location is the nucleoid. In terms of biological role, may be involved in recombination. The protein is Recombination-associated protein RdgC of Burkholderia ambifaria (strain MC40-6).